A 133-amino-acid polypeptide reads, in one-letter code: Small ribosomal subunit protein uS8 (133 aa).

The protein belongs to the universal ribosomal protein uS8 family. In terms of assembly, part of the 30S ribosomal subunit. Contacts proteins S5 and S12.

Functionally, one of the primary rRNA binding proteins, it binds directly to 16S rRNA central domain where it helps coordinate assembly of the platform of the 30S subunit. This Synechococcus sp. (strain CC9605) protein is Small ribosomal subunit protein uS8.